The primary structure comprises 535 residues: Proto-oncogene tyrosine-protein kinase Src (535 aa).

Residues 1–56 (MGSNKSKPKDASQRRRSLEPSENVHGAGGAFPASQTPSKPASADGHRGPSAAFVPP) are disordered. A lipid anchor (N-myristoyl glycine) is attached at G2. A compositionally biased stretch (basic and acidic residues) spans 7-19 (KPKDASQRRRSLE). Residues S17, S21, and S74 each carry the phosphoserine modification. One can recognise an SH3 domain in the interval 83 to 144 (GGVTTFVALY…PSNYVAPSDS (62 aa)). The 98-residue stretch at 150-247 (WYFGKITRRE…GLCHRLTTVC (98 aa)) folds into the SH2 domain. A Phosphotyrosine modification is found at Y186. In terms of domain architecture, Protein kinase spans 269-522 (LRLEVKLGQG…YLQAFLEDYF (254 aa)). Residues 275-283 (LGQGCFGEV) and K297 contribute to the ATP site. Residue D388 is the Proton acceptor of the active site. Y418 bears the Phosphotyrosine; by autocatalysis mark. The residue at position 418 (Y418) is a Phosphotyrosine; by FAK2. Position 529 is a phosphotyrosine; by CSK (Y529).

This sequence belongs to the protein kinase superfamily. Tyr protein kinase family. SRC subfamily. Part of a complex comprised of PTPRA, BCAR1, BCAR3 (via SH2 domain) and SRC; the formation of the complex is dependent on integrin mediated-tyrosine phosphorylation of PTPRA. Interacts with CDCP1, TGFB1I1 and TOM1L2. Interacts with DDEF1/ASAP1 via its SH3 domain. Interacts with CCPG1. Interacts with the cytoplasmic domain of MUC1, phosphorylates it and increases binding of MUC1 with beta-catenin. Interacts with RALGPS1 via its SH3 domain. Interacts with CAV2 (tyrosine phosphorylated form). Interacts (via the SH3 domain and the protein kinase domain) with ARRB1; the interaction is independent of the phosphorylation state of SRC C-terminus. Interacts with FCAMR and PXN. Interacts with ARRB2. Interacts with ARRB1. Interacts with SRCIN1. Interacts with NDFIP2 and more weakly with NDFIP1. Interacts with PIK3CA and/or PIK3C2B, PTK2/FAK1, ESR1 (dimethylated on arginine) and FAK. Interacts (via SH2 and SH3 domain) with TNK2. Interacts (via protein kinase domain) with the tyrosine phosphorylated form of RUNX3 (via runt domain). Interacts with TRAF3 (via RING-type zinc finger domain). Interacts with RIGI, MAVS and TBK1. Interacts (via SH2 domain) with RACK1; the interaction is enhanced by tyrosine phosphorylation of RACK1 and inhibits SRC activity. Interacts (via SH2 domain) with the 'Tyr-402' phosphorylated form of PTK2B/PYK2. Interacts (via SH2 domain) with FLT3 (tyrosine phosphorylated). Identified in a complex containing FGFR4, NCAM1, CDH2, PLCG1, FRS2, SRC, SHC1, GAP43 and CTTN. Interacts with EPHB1; activates the MAPK/ERK cascade to regulate cell migration. Interacts with ERBB2 and STAT1. Interacts with PDGFRA (tyrosine phosphorylated). Interacts with CSF1R. Interacts (via SH2 domain) with the 'Tyr-9' phosphorylated form of PDPK1. Interacts with DDR2. Interacts with AMOTL2; this interaction regulates the translocation of phosphorylated SRC to peripheral cell-matrix adhesion sites. Interacts with DDR1 and DAB2. Interacts with TRAP1. Interacts with CBLC; the interaction is enhanced when SRC is phosphorylated at 'Tyr-424'. Interacts with ARHGEF5. Interacts (via cytoplasmic domain) with CEACAM1 (via SH2 domain); this interaction is regulated by trans-homophilic cell adhesion. Interacts with MPP2. Interacts with PRR7. Interacts (via kinase domain and to a lesser extent the SH2 domain) directly with PDLIM4; this interaction results in PTPN13-mediated dephosphorylation of this protein leading to its inactivation. Interacts with P85 (PIK3R1 or PIK3R2). Interacts with HNRNPA2B1. Interacts with IL6ST/gp130. Interacts (via SH3 domain) with PELP1 in the presence of 17-beta-estradiol. Interacts with AMBRA1. Post-translationally, myristoylated at Gly-2, and this is essential for targeting to membranes. In terms of processing, dephosphorylated at Tyr-529 by PTPRJ. Phosphorylated on Tyr-529 by c-Src kinase (CSK). The phosphorylated form is termed pp60c-src. Dephosphorylated by PTPRJ at Tyr-418. Normally maintained in an inactive conformation with the SH2 domain engaged with Tyr-529, the SH3 domain engaged with the SH2-kinase linker, and Tyr-418 dephosphorylated. Dephosphorylation of Tyr-529 as a result of protein tyrosine phosphatase (PTP) action disrupts the intramolecular interaction between the SH2 domain and Tyr-529, Tyr-418 can then become autophosphorylated, resulting in SRC activation. Phosphorylation of Tyr-529 by CSK allows this interaction to reform, resulting in SRC inactivation. CDK5-mediated phosphorylation at Ser-74 targets SRC to ubiquitin-dependent degradation and thus leads to cytoskeletal reorganization. Phosphorylated by PTK2/FAK1; this enhances kinase activity. Phosphorylated by PTK2B/PYK2; this enhances kinase activity. Upon activation of IL6ST by IL6, Tyr-418 is phosphorylated and Tyr-529 dephosphorylated. Displays reduced levels of autophosphorylation at Tyr-418 compared to isoform 2. Post-translationally, displays enhanced levels of autophosphorylation at Tyr-418 compared to isoform 1. In terms of processing, S-nitrosylation is important for activation of its kinase activity. Ubiquitinated in response to CDK5-mediated phosphorylation. Ubiquitination mediated by CBLC requires SRC autophosphorylation at Tyr-418 and may lead to lysosomal degradation.

The protein localises to the cell membrane. The protein resides in the mitochondrion inner membrane. Its subcellular location is the nucleus. It is found in the cytoplasm. It localises to the cytoskeleton. The protein localises to the perinuclear region. The protein resides in the cell junction. Its subcellular location is the focal adhesion. The enzyme catalyses L-tyrosyl-[protein] + ATP = O-phospho-L-tyrosyl-[protein] + ADP + H(+). Phosphorylation by CSK at Tyr-529 inhibits kinase activity. Inhibitory phosphorylation at Tyr-529 is enhanced by heme. Further phosphorylation by CDK1 partially reactivates CSK-inactivated SRC and facilitates complete reactivation by protein tyrosine phosphatase PTPRC. Integrin engagement stimulates kinase activity. Phosphorylation by PTK2/FAK1 enhances kinase activity. Butein and pseudosubstrate-based peptide inhibitors like CIYKYYF act as inhibitors. Phosphorylation at Tyr-418 increases kinase activity. Non-receptor protein tyrosine kinase which is activated following engagement of many different classes of cellular receptors including immune response receptors, integrins and other adhesion receptors, receptor protein tyrosine kinases, G protein-coupled receptors as well as cytokine receptors. Participates in signaling pathways that control a diverse spectrum of biological activities including gene transcription, immune response, cell adhesion, cell cycle progression, apoptosis, migration, and transformation. Due to functional redundancy between members of the SRC kinase family, identification of the specific role of each SRC kinase is very difficult. SRC appears to be one of the primary kinases activated following engagement of receptors and plays a role in the activation of other protein tyrosine kinase (PTK) families. Receptor clustering or dimerization leads to recruitment of SRC to the receptor complexes where it phosphorylates the tyrosine residues within the receptor cytoplasmic domains. Plays an important role in the regulation of cytoskeletal organization through phosphorylation of specific substrates such as AFAP1. Phosphorylation of AFAP1 allows the SRC SH2 domain to bind AFAP1 and to localize to actin filaments. Cytoskeletal reorganization is also controlled through the phosphorylation of cortactin (CTTN). When cells adhere via focal adhesions to the extracellular matrix, signals are transmitted by integrins into the cell resulting in tyrosine phosphorylation of a number of focal adhesion proteins, including PTK2/FAK1 and paxillin (PXN). In addition to phosphorylating focal adhesion proteins, SRC is also active at the sites of cell-cell contact adherens junctions and phosphorylates substrates such as beta-catenin (CTNNB1), delta-catenin (CTNND1), and plakoglobin (JUP). Another type of cell-cell junction, the gap junction, is also a target for SRC, which phosphorylates connexin-43 (GJA1). SRC is implicated in regulation of pre-mRNA-processing and phosphorylates RNA-binding proteins such as KHDRBS1. Phosphorylates PKP3 at 'Tyr-195' in response to reactive oxygen species, which may cause the release of PKP3 from desmosome cell junctions into the cytoplasm. Also plays a role in PDGF-mediated tyrosine phosphorylation of both STAT1 and STAT3, leading to increased DNA binding activity of these transcription factors. Involved in the RAS pathway through phosphorylation of RASA1 and RASGRF1. Plays a role in EGF-mediated calcium-activated chloride channel activation. Required for epidermal growth factor receptor (EGFR) internalization through phosphorylation of clathrin heavy chain (CLTC and CLTCL1) at 'Tyr-1477'. Involved in beta-arrestin (ARRB1 and ARRB2) desensitization through phosphorylation and activation of GRK2, leading to beta-arrestin phosphorylation and internalization. Has a critical role in the stimulation of the CDK20/MAPK3 mitogen-activated protein kinase cascade by epidermal growth factor. Might be involved not only in mediating the transduction of mitogenic signals at the level of the plasma membrane but also in controlling progression through the cell cycle via interaction with regulatory proteins in the nucleus. Plays an important role in osteoclastic bone resorption in conjunction with PTK2B/PYK2. Both the formation of a SRC-PTK2B/PYK2 complex and SRC kinase activity are necessary for this function. Recruited to activated integrins by PTK2B/PYK2, thereby phosphorylating CBL, which in turn induces the activation and recruitment of phosphatidylinositol 3-kinase to the cell membrane in a signaling pathway that is critical for osteoclast function. Promotes energy production in osteoclasts by activating mitochondrial cytochrome C oxidase. Phosphorylates DDR2 on tyrosine residues, thereby promoting its subsequent autophosphorylation. Phosphorylates RUNX3 and COX2 on tyrosine residues, TNK2 on 'Tyr-284' and CBL on 'Tyr-738'. Enhances RIGI-elicited antiviral signaling. Phosphorylates PDPK1 at 'Tyr-9', 'Tyr-373' and 'Tyr-376'. Phosphorylates BCAR1 at 'Tyr-226'. Phosphorylates CBLC at multiple tyrosine residues, phosphorylation at 'Tyr-341' activates CBLC E3 activity. Phosphorylates synaptic vesicle protein synaptophysin (SYP). Involved in anchorage-independent cell growth. Required for podosome formation. Mediates IL6 signaling by activating YAP1-NOTCH pathway to induce inflammation-induced epithelial regeneration. Phosphorylates OTUB1, promoting deubiquitination of RPTOR. In terms of biological role, non-receptor protein tyrosine kinase which phosphorylates synaptophysin with high affinity. Functionally, non-receptor protein tyrosine kinase which shows higher basal kinase activity than isoform 1, possibly due to weakened intramolecular interactions which enhance autophosphorylation of Tyr-418 and subsequent activation. The SH3 domain shows reduced affinity with the linker sequence between the SH2 and kinase domains which may account for the increased basal activity. Displays altered substrate specificity compared to isoform 1, showing weak affinity for synaptophysin and for peptide substrates containing class I or class II SH3 domain-binding motifs. Plays a role in L1CAM-mediated neurite elongation, possibly by acting downstream of L1CAM to drive cytoskeletal rearrangements involved in neurite outgrowth. This is Proto-oncogene tyrosine-protein kinase Src from Mus musculus (Mouse).